A 501-amino-acid chain; its full sequence is Cytochrome P450 2J5 (501 aa).

A heme-binding site is contributed by cysteine 447.

It belongs to the cytochrome P450 family. Heme serves as cofactor.

It is found in the endoplasmic reticulum membrane. The protein localises to the microsome membrane. It carries out the reaction an organic molecule + reduced [NADPH--hemoprotein reductase] + O2 = an alcohol + oxidized [NADPH--hemoprotein reductase] + H2O + H(+). The polypeptide is Cytochrome P450 2J5 (Cyp2j5) (Mus musculus (Mouse)).